Reading from the N-terminus, the 605-residue chain is Methyl-CpG-binding domain protein 1 (605 aa).

The region spanning 1–69 is the MBD domain; sequence MAEDWLDCPA…TLFDFKQGIL (69 aa). Positions 80–123 are disordered; sequence AVASKKRKKPSRPAKTRKRQVGPQSGEVRKEAPRDETKADTDTA. A compositionally biased stretch (basic residues) spans 83-99; that stretch reads SKKRKKPSRPAKTRKRQ. Residues 84 to 88 carry the Nuclear localization signal motif; the sequence is KKRKK. Over residues 106 to 120 the composition is skewed to basic and acidic residues; that stretch reads EVRKEAPRDETKADT. K117 is covalently cross-linked (Glycyl lysine isopeptide (Lys-Gly) (interchain with G-Cter in SUMO2)). 2 consecutive CXXC-type zinc fingers follow at residues 169–216 and 217–263; these read RMFK…RRCL and RIVE…RRCL. Residues C176, C179, C182, C188, C191, C194, C210, C215, C225, C228, C231, C237, C240, C243, C257, and C262 each contribute to the Zn(2+) site. The segment at 269 to 308 is disordered; sequence RRKGGCDSKMAARRRPGAQPLPPPPPSQSPEPTEPHPRAL. K277 participates in a covalent cross-link: Glycyl lysine isopeptide (Lys-Gly) (interchain with G-Cter in SUMO2). A compositionally biased stretch (pro residues) spans 287 to 297; the sequence is QPLPPPPPSQS. A Phosphoserine modification is found at S297. The segment at 330–378 adopts a CXXC-type 3 zinc-finger fold; sequence TNRRQNRKCGACAACLRRMDCGRCDFCCDKPKFGGSNQKRQKCRWRQCL. Zn(2+) is bound by residues C338, C341, C344, C350, C353, C356, C372, and C377. Phosphoserine occurs at positions 391 and 399. The segment at 391–451 is disordered; sequence SESEDGAGSP…EAGGGFVLPP (61 aa). The segment covering 403–417 has biased composition (basic residues); it reads YRRRKRPSSARRHHL. Residue K422 forms a Glycyl lysine isopeptide (Lys-Gly) (interchain with G-Cter in SUMO2) linkage. The span at 426–439 shows a compositional bias: polar residues; that stretch reads ATRTAQPDHTQAPT. K440 participates in a covalent cross-link: Glycyl lysine isopeptide (Lys-Gly) (interchain with G-Cter in SUMO2). Residues K499 and K538 each participate in a glycyl lysine isopeptide (Lys-Gly) (interchain with G-Cter in SUMO2); alternate cross-link. A disordered region spans residues 520–573; that stretch reads VLVPGCPSKAVDPGLPSVKQEPPDPEEDKEENKDDSASKLAPEEEAGGAGTPVI. The transcriptional repression domain (TRD) stretch occupies residues 529 to 592; the sequence is AVDPGLPSVK…RFRDTAVWLP (64 aa). A Glycyl lysine isopeptide (Lys-Gly) (interchain with G-Cter in SUMO2) cross-link involves residue K558.

Interacts with OASL, ATF7IP, ATF7IP2 and BAHD1. Binds CHAF1A and the SUV39H1-CBX5 complex via the MBD domain. Binds MGP via the TRD domain. May be part of the MeCP1 complex. In terms of processing, sumoylated, sumoylation may increase interaction with ATF7IP. In terms of tissue distribution, widely expressed.

It localises to the nucleus. The protein localises to the nucleus matrix. Its subcellular location is the nucleus speckle. It is found in the chromosome. In terms of biological role, transcriptional repressor that binds CpG islands in promoters where the DNA is methylated at position 5 of cytosine within CpG dinucleotides. Binding is abolished by the presence of 7-mG that is produced by DNA damage by methylmethanesulfonate (MMS). Acts as transcriptional repressor and plays a role in gene silencing by recruiting ATF7IP, which in turn recruits factors such as the histone methyltransferase SETDB1. Probably forms a complex with SETDB1 and ATF7IP that represses transcription and couples DNA methylation and histone 'Lys-9' trimethylation. Isoform 1 and isoform 2 can also repress transcription from unmethylated promoters. This chain is Methyl-CpG-binding domain protein 1, found in Homo sapiens (Human).